A 196-amino-acid polypeptide reads, in one-letter code: ECF RNA polymerase sigma factor SigM (196 aa).

Residues 39-105 (LFRRHHRQLH…ACLDRLRRAK (67 aa)) are sigma-70 factor domain-2. Positions 63–66 (DALQ) match the Polymerase core binding motif. The tract at residues 130–181 (AVQRALMRLPVEQRAAVVAVDMQGYSIADTARMLGVAEGTVKSRCARARARL) is sigma-70 factor domain-4. The segment at residues 156–175 (IADTARMLGVAEGTVKSRCA) is a DNA-binding region (H-T-H motif).

Belongs to the sigma-70 factor family. ECF subfamily. In terms of assembly, interacts transiently with the RNA polymerase catalytic core formed by RpoA, RpoB, RpoC and RpoZ (2 alpha, 1 beta, 1 beta' and 1 omega subunit) to form the RNA polymerase holoenzyme that can initiate transcription. Interacts (via sigma-70 factor domain-4) with anti-sigma-M factor RsmA (AC L7N5D7).

Functionally, sigma factors are initiation factors that promote the attachment of RNA polymerase to specific initiation sites and are then released. Extracytoplasmic function (ECF) sigma factors are held in an inactive form by an anti-sigma factor (RsaM, AC L7N5D7) until released by regulated intramembrane proteolysis. This sigma factor is required for the synthesis of surface or secreted molecules. This chain is ECF RNA polymerase sigma factor SigM (sigM), found in Mycobacterium tuberculosis (strain ATCC 25618 / H37Rv).